The following is a 340-amino-acid chain: Deubiquitinase SseL (340 aa).

His222 is a catalytic residue. Cys284 functions as the Nucleophile in the catalytic mechanism.

This sequence belongs to the peptidase C79 family.

The protein localises to the secreted. It is found in the host cytoplasm. Functionally, effector proteins function to alter host cell physiology and promote bacterial survival in host tissues. This protease targets the host cell ubiquitin pathway by acting as a deubiquitinase in infected host cells. In Salmonella arizonae (strain ATCC BAA-731 / CDC346-86 / RSK2980), this protein is Deubiquitinase SseL (sseL).